A 257-amino-acid polypeptide reads, in one-letter code: tRNA (cytidine/uridine/adenosine-2'-O-)-methyltransferase TrmJ (257 aa).

S-adenosyl-L-methionine contacts are provided by residues 79 to 82 (TSAR), 115 to 117 (GRE), I135, and 142 to 144 (GSL).

Belongs to the class IV-like SAM-binding methyltransferase superfamily. RNA methyltransferase TrmH family. Homodimer.

Its subcellular location is the cytoplasm. The catalysed reaction is cytidine(32) in tRNA + S-adenosyl-L-methionine = 2'-O-methylcytidine(32) in tRNA + S-adenosyl-L-homocysteine + H(+). It catalyses the reaction uridine(32) in tRNA + S-adenosyl-L-methionine = 2'-O-methyluridine(32) in tRNA + S-adenosyl-L-homocysteine + H(+). The enzyme catalyses adenosine(32) in tRNA + S-adenosyl-L-methionine = 2'-O-methyladenosine(32) in tRNA + S-adenosyl-L-homocysteine + H(+). Functionally, catalyzes the formation of 2'O-methylated cytidine (Cm32), 2'O-methylated uridine (Um32) or 2'O-methylated adenosine (Am32) at position 32 in tRNA. Confers resistance to oxidative stress. This is tRNA (cytidine/uridine/adenosine-2'-O-)-methyltransferase TrmJ from Pseudomonas aeruginosa (strain UCBPP-PA14).